Here is a 154-residue protein sequence, read N- to C-terminus: MIITTWIMYIFARKTVGLPFPPRVNSDIEVEESEAVSVVQHWLNKTEEEASRSIREKMSINDSPTHGHDIHVTRDLVKHHLSKSDMLTDPSQEVLEERTRIQFIRWSHTRIFQVPSEVMDDVMQERIDQVRRSVSHLMCDSYNDPSFRTSCSEC.

A mitochondrion-targeting transit peptide spans 1–24 (MIITTWIMYIFARKTVGLPFPPRV). A phosphoserine mark is found at serine 26 and serine 116.

Expressed specifically in adult testis (at protein level).

The protein localises to the mitochondrion outer membrane. The protein resides in the mitochondrion. It is found in the cell projection. It localises to the cilium. Its subcellular location is the flagellum. Functionally, essential for sperm motility and male fertility. Plays an important role in sperm motility by regulating the organization and function of the mitochondria and is also required for correct sperm midpiece assembly. The chain is Spermatogenesis-associated protein 19, mitochondrial (Spata19) from Mus musculus (Mouse).